Consider the following 77-residue polypeptide: Acyl carrier protein (77 aa).

The Carrier domain occupies 3–77; it reads QEIFEKVKKI…GKAVEHIESK (75 aa). O-(pantetheine 4'-phosphoryl)serine is present on Ser-38.

The protein belongs to the acyl carrier protein (ACP) family. 4'-phosphopantetheine is transferred from CoA to a specific serine of apo-ACP by AcpS. This modification is essential for activity because fatty acids are bound in thioester linkage to the sulfhydryl of the prosthetic group.

The protein localises to the cytoplasm. It participates in lipid metabolism; fatty acid biosynthesis. Functionally, carrier of the growing fatty acid chain in fatty acid biosynthesis. This chain is Acyl carrier protein, found in Synechocystis sp. (strain ATCC 27184 / PCC 6803 / Kazusa).